We begin with the raw amino-acid sequence, 253 residues long: Imidazole glycerol phosphate synthase subunit HisF (253 aa).

Active-site residues include Asp-12 and Asp-131.

It belongs to the HisA/HisF family. Heterodimer of HisH and HisF.

It localises to the cytoplasm. The enzyme catalyses 5-[(5-phospho-1-deoxy-D-ribulos-1-ylimino)methylamino]-1-(5-phospho-beta-D-ribosyl)imidazole-4-carboxamide + L-glutamine = D-erythro-1-(imidazol-4-yl)glycerol 3-phosphate + 5-amino-1-(5-phospho-beta-D-ribosyl)imidazole-4-carboxamide + L-glutamate + H(+). The protein operates within amino-acid biosynthesis; L-histidine biosynthesis; L-histidine from 5-phospho-alpha-D-ribose 1-diphosphate: step 5/9. Functionally, IGPS catalyzes the conversion of PRFAR and glutamine to IGP, AICAR and glutamate. The HisF subunit catalyzes the cyclization activity that produces IGP and AICAR from PRFAR using the ammonia provided by the HisH subunit. The polypeptide is Imidazole glycerol phosphate synthase subunit HisF (Corynebacterium urealyticum (strain ATCC 43042 / DSM 7109)).